Here is a 1017-residue protein sequence, read N- to C-terminus: Anaphase-promoting complex subunit 5 (1017 aa).

TPR repeat units lie at residues 30-63 (KQSL…EKEL), 182-214 (DMSM…SPLD), 252-286 (VKRV…VNGQ), 337-370 (PYAV…AQER), and 508-541 (NNNN…WNDI). Over residues 451–525 (INSNNYNSNN…NNNSSNSNNN (75 aa)) the composition is skewed to low complexity. 2 disordered regions span residues 451–527 (INSN…NNGG) and 617–636 (NNNN…QQQN). TPR repeat units lie at residues 642–675 (LLSF…YKTQ), 756–790 (VICY…SRDF), 838–871 (ADSN…VLSD), 876–908 (SQLY…FLQL), and 931–964 (KEIY…LVPS).

It belongs to the APC5 family. The APC/C is composed of at least 13 subunits that stay tightly associated throughout the cell cycle: anapc1, anapc2, anapc3, anapc4, anapc5, anapc6, anapc7, anapc8, anapc10, anapc11, cdc20, cdc26 and cdh1.

The protein resides in the nucleus. Its pathway is protein modification; protein ubiquitination. Its function is as follows. Component of the anaphase promoting complex/cyclosome (APC/C), a cell cycle-regulated E3 ubiquitin-protein ligase complex that controls progression through mitosis and the G1 phase of the cell cycle. In Dictyostelium discoideum (Social amoeba), this protein is Anaphase-promoting complex subunit 5 (anapc5).